The sequence spans 206 residues: Thymidylate kinase (206 aa).

10 to 17 (GVDGVGKT) is an ATP binding site.

The protein belongs to the thymidylate kinase family.

The catalysed reaction is dTMP + ATP = dTDP + ADP. In terms of biological role, phosphorylation of dTMP to form dTDP in both de novo and salvage pathways of dTTP synthesis. The protein is Thymidylate kinase of Bifidobacterium longum (strain DJO10A).